Consider the following 295-residue polypeptide: MLIEFTKMHGLGNDFMVIDLVTQRLDLTKDLVQLLGDRHLGIGFDQLLVVEPPMRPDVDFSYRIFNTDGTEVEQCGNGARCFARFVQARKLSFKQRLRVETASGIISLTTDHYGWVEVDMGKPKFEPSEIPFTPRATTKIQNAYHLDVNGTPVQLYVANMGNPHAVIKVDDVLDADVESLGRAIESHPAFPERVNVGFMQVMNQRHIRLRVYERGVGETQACGTGACAAVAIGIREGWLDEGEDVRAQLYGGSMVIKWQPGYSVMMTGPTAFVYEGVFSPDGLMAQAGIKPNPEI.

3 residues coordinate substrate: Asn-13, Gln-46, and Asn-66. Cys-75 serves as the catalytic Proton donor. Residues 76 to 77 (GN), Asn-162, Asn-195, and 213 to 214 (ER) each bind substrate. Residue Cys-222 is the Proton acceptor of the active site. Residue 223-224 (GT) participates in substrate binding.

It belongs to the diaminopimelate epimerase family. In terms of assembly, homodimer.

The protein resides in the cytoplasm. The enzyme catalyses (2S,6S)-2,6-diaminopimelate = meso-2,6-diaminopimelate. It participates in amino-acid biosynthesis; L-lysine biosynthesis via DAP pathway; DL-2,6-diaminopimelate from LL-2,6-diaminopimelate: step 1/1. Catalyzes the stereoinversion of LL-2,6-diaminopimelate (L,L-DAP) to meso-diaminopimelate (meso-DAP), a precursor of L-lysine and an essential component of the bacterial peptidoglycan. This chain is Diaminopimelate epimerase, found in Psychrobacter arcticus (strain DSM 17307 / VKM B-2377 / 273-4).